The sequence spans 553 residues: Sulfatase (553 aa).

The signal sequence occupies residues 1–25; the sequence is MTSEMKKFSKIVLFGLLISPLLASS. Ca(2+)-binding residues include Asp43, Asp44, and Cys88. The active-site Nucleophile is the Cys88. Cys88 carries the post-translational modification 3-oxoalanine (Cys). Residue His159 is part of the active site. 2 residues coordinate Ca(2+): Asp350 and Asn351.

It belongs to the sulfatase family. It depends on Ca(2+) as a cofactor. Post-translationally, the conversion to 3-oxoalanine (also known as C-formylglycine, FGly), of a serine or cysteine residue in prokaryotes and of a cysteine residue in eukaryotes, is critical for catalytic activity. This post-translational modification is severely defective in multiple sulfatase deficiency (MSD).

The protein resides in the secreted. Sulfatase that may be involved in ulvan degradation. Ulvan is the main polysaccharide component of the Ulvales (green seaweed) cell wall. It is composed of disaccharide building blocks comprising 3-sulfated rhamnose (Rha3S) linked to D-glucuronic acid (GlcA), L-iduronic acid (IduA), or D-xylose (Xyl). This chain is Sulfatase, found in Formosa agariphila (strain DSM 15362 / KCTC 12365 / LMG 23005 / KMM 3901 / M-2Alg 35-1).